A 457-amino-acid polypeptide reads, in one-letter code: MPLTQTPSIFTVSRLNQSVRLLLEQEMGQVWISGEISNFTQPASGHWYFTLKDDTAQVRCAMFRNSNRRVTFRPQHGQQVLVRANITLYEPRGDYQIIVESMQPAGEGLLQQRYEQLKQQLAAEGLFDPALKKPLPSPARQVGVITSKTGAALHDVLNVLRRRDPSLPVVIYPTAVQGDDAPAQIVRAIELANLRDECDVLIVGRGGGSLEDLWSFNDERVARAIFASRIPIVSAVGHETDVTIADFVADLRAPTPSAAAEIVSRNQLELLRQVQALQQRLEMAMDYSLANRQQRFTRLHHRLEQQHPQLRLARQQTLLMRLRQRMDNALDSRMRHATQRQTRLMQRLNQQQPLPRLHRASARVQQLEYRLGQIVAARLSHTRERFGNAITHLEAVSPLATLARGYSVTTAQDGNVLKATKQVRPGDTLTTRLADGWVESEVRQITPAKKTRKKKTG.

Belongs to the XseA family. Heterooligomer composed of large and small subunits.

It localises to the cytoplasm. It catalyses the reaction Exonucleolytic cleavage in either 5'- to 3'- or 3'- to 5'-direction to yield nucleoside 5'-phosphates.. Functionally, bidirectionally degrades single-stranded DNA into large acid-insoluble oligonucleotides, which are then degraded further into small acid-soluble oligonucleotides. This is Exodeoxyribonuclease 7 large subunit from Cronobacter sakazakii (strain ATCC BAA-894) (Enterobacter sakazakii).